We begin with the raw amino-acid sequence, 240 residues long: Membrane-spanning 4-domains subfamily A member 7 (240 aa).

Residues 1 to 47 (MLLQSQTMGVSHSFTPKGITIPQREKPGHMYQNEDYLQNGLPTETTV) lie on the Cytoplasmic side of the membrane. Residues 48–68 (LGTVQILCCLLISSLGAILVF) form a helical membrane-spanning segment. Residues 69–83 (APYPSHFNPAISTTL) are Extracellular-facing. A helical membrane pass occupies residues 84-104 (MSGYPFLGALCFGITGSLSII). The Cytoplasmic portion of the chain corresponds to 105 to 121 (SGKQSTKPFDLSSLTSN). The helical transmembrane segment at 122–142 (AVSSVTAGAGLFLLADSMVAL) threads the bilayer. Topologically, residues 143-178 (RTASQHCGSEMDYLSSLPYSEYYYPIYEIKDCLLTS) are extracellular. The chain crosses the membrane as a helical span at residues 179–199 (VSLTGVLVVMLIFTVLELLLA). Residues 200–240 (AYSSVFWWKQLYSNNPGSSFSSTQSQDHIQQVKKSSSRSWI) are Cytoplasmic-facing. A disordered region spans residues 218 to 240 (SFSSTQSQDHIQQVKKSSSRSWI).

This sequence belongs to the MS4A family. Ubiquitous expression in normal tissues. Expression is more elevated in adult liver, lung, spleen, and heart than in their fetal counterparts, and is higher in normal tissues than in the cancerous tissue or cell lines. Low levels of expression were detected in the promonocytic stage, whereas high levels of expression were detected in mature monocytes.

The protein resides in the membrane. Its function is as follows. May be involved in signal transduction as a component of a multimeric receptor complex. The sequence is that of Membrane-spanning 4-domains subfamily A member 7 (MS4A7) from Homo sapiens (Human).